Reading from the N-terminus, the 302-residue chain is Homoserine O-acetyltransferase (302 aa).

Residue C142 is the Acyl-thioester intermediate of the active site. Substrate contacts are provided by K163 and S192. Catalysis depends on H235, which acts as the Proton acceptor. E237 is a catalytic residue. R249 provides a ligand contact to substrate.

Belongs to the MetA family.

The protein resides in the cytoplasm. The catalysed reaction is L-homoserine + acetyl-CoA = O-acetyl-L-homoserine + CoA. It functions in the pathway amino-acid biosynthesis; L-methionine biosynthesis via de novo pathway; O-acetyl-L-homoserine from L-homoserine: step 1/1. Its function is as follows. Transfers an acetyl group from acetyl-CoA to L-homoserine, forming acetyl-L-homoserine. This is Homoserine O-acetyltransferase from Geobacillus kaustophilus.